The sequence spans 178 residues: Ribosome maturation factor RimP (178 aa).

It belongs to the RimP family.

It localises to the cytoplasm. Required for maturation of 30S ribosomal subunits. The polypeptide is Ribosome maturation factor RimP (Cutibacterium acnes (strain DSM 16379 / KPA171202) (Propionibacterium acnes)).